The sequence spans 225 residues: MGVIFENDWQELLKDEFEKEYYKKVRGFLVEEYRTKTIYPDKNHIFSALHYTAYKDVRVVILGQDPYHGPNQAHGLSFSVQPGVRIPPSLVNIYKELETDLGCYIPNHGYLKKWADQGVLLLNTSLTVRAGEANSHQKIGWEIFTDHIIQLLNDRKEPIVFILWGNNAISKERFITNPQHYIIKSVHPSPLSASRGFFGSKPFSKTNSFLESIGEKPIDWQIENR.

The active-site Proton acceptor is the aspartate 65.

The protein belongs to the uracil-DNA glycosylase (UDG) superfamily. UNG family.

The protein localises to the cytoplasm. The enzyme catalyses Hydrolyzes single-stranded DNA or mismatched double-stranded DNA and polynucleotides, releasing free uracil.. Excises uracil residues from the DNA which can arise as a result of misincorporation of dUMP residues by DNA polymerase or due to deamination of cytosine. The protein is Uracil-DNA glycosylase of Alkaliphilus oremlandii (strain OhILAs) (Clostridium oremlandii (strain OhILAs)).